The primary structure comprises 155 residues: Desiccation-related protein clone PCC6-19 (155 aa).

The tract at residues 1–155 is disordered; sequence MAQFGGEKYG…IKEKLPGGQH (155 aa). 2 stretches are compositionally biased toward gly residues: residues 27–39 and 47–76; these read AHRG…GGQQ and GVLG…GALG. Residues 83 to 92 show a composition bias toward low complexity; it reads GSSSSSSSSE. The span at 118 to 135 shows a compositional bias: polar residues; that stretch reads TTTDQQQYGTAATHGQAQ. Basic and acidic residues predominate over residues 136 to 155; the sequence is QHEKKGIMDKIKEKLPGGQH.

The protein belongs to the plant dehydrin family.

The sequence is that of Desiccation-related protein clone PCC6-19 from Craterostigma plantagineum (Blue gem).